Here is a 387-residue protein sequence, read N- to C-terminus: Zinc homeostasis factor 1 (387 aa).

4 consecutive transmembrane segments (helical) span residues 10-30 (IILLLGIDVTFFFIEIITGYA), 34-54 (LALIADSFHMLNDIVSLLVAL), 77-97 (EILGALSNGVFLIALCMFIFM), and 113-133 (TLMFFVGSLGLLSNFVGIFLF). Polar residues predominate over residues 195 to 214 (SYTGNHNGAGTSKPVNNHGS). The segment at 195–221 (SYTGNHNGAGTSKPVNNHGSIEQDAPK) is disordered. 2 helical membrane-spanning segments follow: residues 234 to 254 (FLHVLGDALGNIGVISAALFI) and 263 to 283 (FLFDPCISILLTFIILFSAIP).

The protein belongs to the cation diffusion facilitator (CDF) transporter (TC 2.A.4) family. SLC30A subfamily.

The protein resides in the endoplasmic reticulum membrane. The protein localises to the nucleus membrane. In terms of biological role, involved in zinc homeostasis, where it plays a role in its accumulation in the endoplasmic reticulum/nucleus. Also has a role in the sequestration of cadmium into the endoplasmic reticulum. The polypeptide is Zinc homeostasis factor 1 (zhf1) (Schizosaccharomyces pombe (strain 972 / ATCC 24843) (Fission yeast)).